Consider the following 153-residue polypeptide: Xanthine-guanine phosphoribosyltransferase (153 aa).

5-phospho-alpha-D-ribose 1-diphosphate-binding positions include 37-38, R69, and 88-96; these read RG and DDLVDTGGT. R69 lines the GMP pocket. D89 lines the Mg(2+) pocket. The guanine site is built by D92 and I135. Xanthine is bound by residues D92 and I135. GMP-binding positions include 92–96 and 134–135; these read DTGGT and WI.

Belongs to the purine/pyrimidine phosphoribosyltransferase family. XGPT subfamily. As to quaternary structure, homotetramer. Requires Mg(2+) as cofactor.

Its subcellular location is the cell inner membrane. It carries out the reaction GMP + diphosphate = guanine + 5-phospho-alpha-D-ribose 1-diphosphate. The enzyme catalyses XMP + diphosphate = xanthine + 5-phospho-alpha-D-ribose 1-diphosphate. It catalyses the reaction IMP + diphosphate = hypoxanthine + 5-phospho-alpha-D-ribose 1-diphosphate. It functions in the pathway purine metabolism; GMP biosynthesis via salvage pathway; GMP from guanine: step 1/1. The protein operates within purine metabolism; XMP biosynthesis via salvage pathway; XMP from xanthine: step 1/1. Functionally, purine salvage pathway enzyme that catalyzes the transfer of the ribosyl-5-phosphate group from 5-phospho-alpha-D-ribose 1-diphosphate (PRPP) to the N9 position of the 6-oxopurines guanine and xanthine to form the corresponding ribonucleotides GMP (guanosine 5'-monophosphate) and XMP (xanthosine 5'-monophosphate), with the release of PPi. To a lesser extent, also acts on hypoxanthine. The chain is Xanthine-guanine phosphoribosyltransferase from Proteus mirabilis (strain HI4320).